The chain runs to 371 residues: DNA replication and repair protein RecF (371 aa).

30–37 is a binding site for ATP; sequence GQNGMGKT.

Belongs to the RecF family.

The protein localises to the cytoplasm. The RecF protein is involved in DNA metabolism; it is required for DNA replication and normal SOS inducibility. RecF binds preferentially to single-stranded, linear DNA. It also seems to bind ATP. The sequence is that of DNA replication and repair protein RecF from Phocaeicola vulgatus (strain ATCC 8482 / DSM 1447 / JCM 5826 / CCUG 4940 / NBRC 14291 / NCTC 11154) (Bacteroides vulgatus).